A 211-amino-acid polypeptide reads, in one-letter code: tRNA (guanine-N(7)-)-methyltransferase (211 aa).

S-adenosyl-L-methionine contacts are provided by E37, D62, E89, and D112. The active site involves D112. Substrate contacts are provided by K116 and D148.

The protein belongs to the class I-like SAM-binding methyltransferase superfamily. TrmB family.

It carries out the reaction guanosine(46) in tRNA + S-adenosyl-L-methionine = N(7)-methylguanosine(46) in tRNA + S-adenosyl-L-homocysteine. It functions in the pathway tRNA modification; N(7)-methylguanine-tRNA biosynthesis. Catalyzes the formation of N(7)-methylguanine at position 46 (m7G46) in tRNA. The protein is tRNA (guanine-N(7)-)-methyltransferase of Geobacter metallireducens (strain ATCC 53774 / DSM 7210 / GS-15).